A 259-amino-acid chain; its full sequence is MRTADLFYALYARRLRRQTAAGPLPKHIGLIMDGNRRWARQMGMANPSIGHRYGAEHVESVLSWCETAGIKHVTVFVCSTENLQRRGDTEVSFLMQVIEQVVAVHLARPDARWQVRIAGTLDXPCADSTAHALKEAVEATRRCTTGSQVTLAIGYGGRQEVIDAVRELLHEQAAAGTTLEDLAASLTMDDITRHLYTAGQPDPDLVIRTSGEQRMSNFLLWQSAYSELYFCEAYWPAFREIDFLRALRSYAARQRRYGA.

Asp33 is an active-site residue. Asp33 is a binding site for Mg(2+). Substrate-binding positions include 34 to 37 (GNRR), Trp38, His51, and 79 to 81 (STE). The active-site Proton acceptor is the Asn82. Residues Arg86, Arg208, and 214-216 (RMS) contribute to the substrate site. Position 227 (Glu227) interacts with Mg(2+).

This sequence belongs to the UPP synthase family. In terms of assembly, homodimer. It depends on Mg(2+) as a cofactor.

Functionally, catalyzes the condensation of isopentenyl diphosphate (IPP) with allylic pyrophosphates generating different type of terpenoids. The chain is Isoprenyl transferase from Streptomyces fradiae (Streptomyces roseoflavus).